The primary structure comprises 378 residues: Flap endonuclease 1 (378 aa).

An N-domain region spans residues methionine 1–arginine 104. Position 34 (aspartate 34) interacts with Mg(2+). Residues arginine 47 and arginine 70 each contribute to the DNA site. Aspartate 86 provides a ligand contact to Mg(2+). A disordered region spans residues proline 90–aspartate 113. The segment covering serine 95 to aspartate 113 has biased composition (basic and acidic residues). The segment at serine 122–tyrosine 253 is I-domain. Mg(2+) is bound by residues glutamate 158, glutamate 160, aspartate 179, and aspartate 181. DNA is bound at residue glutamate 158. Positions 231 and 233 each coordinate DNA. Aspartate 233 is a binding site for Mg(2+). The tract at residues glutamine 336–phenylalanine 344 is interaction with PCNA. Residues lysine 348–lysine 378 are disordered. The segment covering threonine 354–asparagine 364 has biased composition (basic and acidic residues). Basic residues predominate over residues leucine 365 to lysine 378.

It belongs to the XPG/RAD2 endonuclease family. FEN1 subfamily. In terms of assembly, interacts with PCNA. Three molecules of FEN1 bind to one PCNA trimer with each molecule binding to one PCNA monomer. PCNA stimulates the nuclease activity without altering cleavage specificity. It depends on Mg(2+) as a cofactor. Post-translationally, phosphorylated. Phosphorylation upon DNA damage induces relocalization to the nuclear plasma.

Its subcellular location is the nucleus. It localises to the nucleolus. The protein resides in the nucleoplasm. It is found in the mitochondrion. Functionally, structure-specific nuclease with 5'-flap endonuclease and 5'-3' exonuclease activities involved in DNA replication and repair. During DNA replication, cleaves the 5'-overhanging flap structure that is generated by displacement synthesis when DNA polymerase encounters the 5'-end of a downstream Okazaki fragment. It enters the flap from the 5'-end and then tracks to cleave the flap base, leaving a nick for ligation. Also involved in the long patch base excision repair (LP-BER) pathway, by cleaving within the apurinic/apyrimidinic (AP) site-terminated flap. Acts as a genome stabilization factor that prevents flaps from equilibrating into structures that lead to duplications and deletions. Also possesses 5'-3' exonuclease activity on nicked or gapped double-stranded DNA, and exhibits RNase H activity. Also involved in replication and repair of rDNA and in repairing mitochondrial DNA. The protein is Flap endonuclease 1 of Brugia malayi (Filarial nematode worm).